A 611-amino-acid polypeptide reads, in one-letter code: Growth hormone receptor (611 aa).

The N-terminal stretch at 1-20 (MDLRHLLLTLVLVCANDSLS) is a signal peptide. Asparagine 16 carries N-linked (GlcNAc...) asparagine glycosylation. Topologically, residues 21 to 240 (ASDDVLRLPQ…EFVHCAEEIE (220 aa)) are extracellular. A disulfide bond links cysteine 34 and cysteine 44. The N-linked (GlcNAc...) asparagine glycan is linked to asparagine 53. Cysteine 75 and cysteine 86 are joined by a disulfide. Asparagine 89 carries an N-linked (GlcNAc...) asparagine glycan. A disulfide bridge links cysteine 100 with cysteine 114. Positions 125-228 (PPVHLNWTLL…EILYVSFSQA (104 aa)) constitute a Fibronectin type-III domain. N-linked (GlcNAc...) asparagine glycans are attached at residues asparagine 130, asparagine 135, and asparagine 174. A WSXWS motif motif is present at residues 214–218 (FGEFS). Residues 241 to 264 (FPWFLVVIFGACGLAVTVILILLS) form a helical membrane-spanning segment. Residues 265 to 611 (KQSRLKMLIF…STDQLNKIMP (347 aa)) are Cytoplasmic-facing. The interval 270–355 (KMLIFPPVPV…HLKSHSCLGA (86 aa)) is required for JAK2 binding. Residues 273-281 (IFPPVPVPK) carry the Box 1 motif motif. Residues 316–325 (DLWVEFIELD) carry the UbE motif motif. The disordered stretch occupies residues 411-455 (SLPSLANTDTQQPRMSTRPENSQPWPPFADSIDAASPSAHNQLSN). Polar residues predominate over residues 414–433 (SLANTDTQQPRMSTRPENSQ).

The protein belongs to the type I cytokine receptor family. Type 1 subfamily. In terms of processing, the soluble form (GHBP) is produced by phorbol ester-promoted proteolytic cleavage at the cell surface (shedding) by ADAM17/TACE.

Its subcellular location is the cell membrane. The protein resides in the secreted. In terms of biological role, receptor for pituitary gland growth hormone (GH1) involved in regulating postnatal body growth. On ligand binding, couples to the JAK2/STAT5 pathway. Functionally, the soluble form (GHBP) acts as a reservoir of growth hormone in plasma and may be a modulator/inhibitor of GH signaling. This Columba livia (Rock dove) protein is Growth hormone receptor (GHR).